The chain runs to 207 residues: Small ribosomal subunit protein uS10m (207 aa).

The transit peptide at 1–24 (MLSVFGLRTVARCNSTLASGGARA) directs the protein to the mitochondrion.

This sequence belongs to the universal ribosomal protein uS10 family. As to quaternary structure, part of the mitochondrial small ribosomal subunit.

The protein resides in the mitochondrion. In terms of biological role, involved in mitochondrial genome encoded proteins translation. Involved in the binding of tRNA to the ribosomes. This chain is Small ribosomal subunit protein uS10m (RSM10), found in Eremothecium gossypii (strain ATCC 10895 / CBS 109.51 / FGSC 9923 / NRRL Y-1056) (Yeast).